Reading from the N-terminus, the 432-residue chain is Transcriptional adapter 3 (432 aa).

Lysine 21 participates in a covalent cross-link: Glycyl lysine isopeptide (Lys-Gly) (interchain with G-Cter in SUMO2). Residues 40-69 adopt a coiled-coil conformation; sequence IEELDTLQLELETLLSSASRRLRVLEAETQ. The tract at residues 87–126 is disordered; that stretch reads GRDHELGAPPKHGKPKKQKLEGKAGHGPGPGPGRPKSKNL. Lysine 129 is covalently cross-linked (Glycyl lysine isopeptide (Lys-Gly) (interchain with G-Cter in SUMO2)). The interval 272–319 is disordered; the sequence is NIISPMEDSPIPDMSGKESGADGASTSPRNQNKPFSVPHTKSLESRIK. A phosphoserine mark is found at serine 280 and serine 298. Over residues 295 to 305 the composition is skewed to polar residues; the sequence is ASTSPRNQNKP. A coiled-coil region spans residues 367–407; that stretch reads LLRLAKEEVSRQELRQRVRMADNEVMDAFRKIMAARQKKRT. An N6-acetyllysine modification is found at lysine 418.

This sequence belongs to the NGG1 family. In terms of assembly, the PCAF complex is composed of a number of TBP-associated factors (TAFS), such as TAF5, TAF5L, TAF6, TAF6L, TAF9, TAF10 and TAF12, PCAF, and also PCAF-associated factors (PAFs), such as TADA2L/ADA2, TADA3L/ADA3 and SPT3. Interacts directly with TADA2L and PCAF and also with the high-risk HPV oncoprotein E6. Component of the STAGA transcription coactivator-HAT complex, at least composed of SUPT3H, GCN5L2, TAF5L, TAF6L, SUPT7L, TADA3L, TAD1L, TAF10, TAF12, TRRAP and TAF9. Component of the TFTC-HAT complex. Component of the ADA2A-containing complex (ATAC), composed of KAT14, KAT2A, TADA2L, TADA3L, ZZ3, MBIP, WDR5, YEATS2, CCDC101 and DR1. In terms of tissue distribution, ubiquitously expressed.

Its subcellular location is the nucleus. In terms of biological role, functions as a component of the PCAF complex. The PCAF complex is capable of efficiently acetylating histones in a nucleosomal context. The PCAF complex could be considered as the human version of the yeast SAGA complex. Also known as a coactivator for p53/TP53-dependent transcriptional activation. Component of the ATAC complex, a complex with histone acetyltransferase activity on histones H3 and H4. The polypeptide is Transcriptional adapter 3 (TADA3) (Homo sapiens (Human)).